The chain runs to 1914 residues: Fatty acid synthase beta subunit stcK (1914 aa).

The interval 17–395 (LYACFGGQGP…LEGTGMNVVN (379 aa)) is acetyltransferase (AT) domain. Residues 446-692 (TRLLGTPHVM…LIVEAPGVKD (247 aa)) form an enoyl reductase (ER) domain region. Residues 1009–1509 (GECAWGYAAL…RANDRLRMEI (501 aa)) form a dehydratase (DH) domain region. The MaoC-like domain occupies 1398–1532 (FLNRHGAPRV…VRVLKESTGE (135 aa)). The malonyl/palmitoyl transferase (MT/PT) domain stretch occupies residues 1548–1900 (YVFTGQGTQE…IRLVQGVTQS (353 aa)).

It belongs to the fungal fatty acid synthetase subunit beta family. In terms of assembly, [Alpha(6)beta(6)] hexamers of two multifunctional subunits (alpha and beta).

It carries out the reaction acetyl-CoA + n malonyl-CoA + 2n NADPH + 4n H(+) = a long-chain-acyl-CoA + n CoA + n CO2 + 2n NADP(+).. The enzyme catalyses holo-[ACP] + acetyl-CoA = acetyl-[ACP] + CoA. The catalysed reaction is holo-[ACP] + malonyl-CoA = malonyl-[ACP] + CoA. It catalyses the reaction a (3R)-hydroxyacyl-[ACP] = a (2E)-enoyl-[ACP] + H2O. It carries out the reaction a 2,3-saturated acyl-[ACP] + NAD(+) = a (2E)-enoyl-[ACP] + NADH + H(+). The enzyme catalyses (9Z)-octadecenoyl-[ACP] + H2O = (9Z)-octadecenoate + holo-[ACP] + H(+). The protein operates within mycotoxin biosynthesis; sterigmatocystin biosynthesis. Its function is as follows. Fatty acid synthase beta subunit; part of the gene cluster that mediates the biosynthesis of sterigmatocystin (ST), a polyketide-derived furanocoumarin which is part of the most toxic and carcinogenic compounds among the known mycotoxins. The first step in the biosynthesis of sterigmatocystin is the production of hexanoate by the fatty acid synthase (FAS) units stcJ and stcK. The polyketide backbone is assembled by the non-reducing polyketide synthase stcA by condensation of the starter hexanoyl-CoA and 7 malonyl-CoA extender units followed by cyclization and release of norsolorinic acid. Norsolorinic acid is the first stable intermediate in the biosynthesis of sterigmatocystin and is converted into averantin (AVN) by the ketoreductase stcE which reduces the hexanoate ketone to an alcohol. Averantin is then oxidized into 5'-hydroxyaverantin (HAVN) by the cytochrome P450 monooxygenase stcF. 5'-hydroxyaverantin is further converted to 5'-oxyaverantin (OAVN) by the 5'-hydroxyaverantin dehydrogenase stcG. The next step is the conversion of OAVN into averufin (AVF) which is catalyzed by a yet to be identified enzyme. The cytochrome P450 monooxygenase stcB and the flavin-binding monooxygenase stcW are both required for the conversion of averufin to 1-hydroxyversicolorone. The esterase stcI probably catalyzes the formation of versiconal hemiacetal acetate from 1-hydroxyversicolorone. The oxydoreductase stcN then probably catalyzes the biosynthetic step from versiconal to versicolorin B (VERB). The next step is performed by the versicolorin B desaturase stcL to produce versicolorin A (VERA). The ketoreductase stcU and the cytochrome P450 monooxygenase stcS are involved in the conversion of versicolorin A to demethylsterigmatocystin. The Baeyer-Villiger oxidas stcQ and the reductase stcR might be involved in the biosynthetic step from versicolorin A to demethylsterigmatocystin. The final step in the biosynthesis of sterigmatocystin is the methylation of demethylsterigmatocystin catalyzed by the methyltransferase stcP. The sequence is that of Fatty acid synthase beta subunit stcK from Emericella nidulans (strain FGSC A4 / ATCC 38163 / CBS 112.46 / NRRL 194 / M139) (Aspergillus nidulans).